Reading from the N-terminus, the 308-residue chain is MSEEDGGSMSVKSSLSSFLKILSSYNSNVLLAALVFLLLVVLFVLLLHFYARFFWSPSHQDFSAAARHRRRRRRNRRRTVTTTRIIPSLPLGGFDDGVSSPAATATRDDKGLDSSVISSIPLFVYEENEEEEDEEEECVICLGLWEAGDFGRKLRNCGHGFHVECIDMWLSSHSTCPLCRSPVLAAVSDEENLKLAVNAVEEEAEVRLQMSPAGENESNVSGDRRVSLSLSVMEDDLKTGDDDGEEEVRIEVFDDDEEINDGGTRSDRRRSMSMTSSASSSLMRMLSSSSSRSERNKVFPTARQDSSK.

Residues 29–49 (VLLAALVFLLLVVLFVLLLHF) traverse the membrane as a helical segment. The RING-type; atypical zinc finger occupies 138–180 (CVICLGLWEAGDFGRKLRNCGHGFHVECIDMWLSSHSTCPLCR). The tract at residues 252–308 (VFDDDEEINDGGTRSDRRRSMSMTSSASSSLMRMLSSSSSRSERNKVFPTARQDSSK) is disordered. Residues 272-291 (MSMTSSASSSLMRMLSSSSS) are compositionally biased toward low complexity.

Belongs to the RING-type zinc finger family. ATL subfamily.

It is found in the membrane. It carries out the reaction S-ubiquitinyl-[E2 ubiquitin-conjugating enzyme]-L-cysteine + [acceptor protein]-L-lysine = [E2 ubiquitin-conjugating enzyme]-L-cysteine + N(6)-ubiquitinyl-[acceptor protein]-L-lysine.. The protein operates within protein modification; protein ubiquitination. The chain is RING-H2 finger protein ATL63 (ATL63) from Arabidopsis thaliana (Mouse-ear cress).